Here is a 351-residue protein sequence, read N- to C-terminus: Increased glyphosate resistance protein (351 aa).

The segment covering Met-1–Ser-18 has biased composition (basic and acidic residues). The segment at Met-1–Pro-29 is disordered.

In terms of biological role, confers an increase in glyphosate resistance when expressed in E.coli. This Pseudomonas sp. (strain PG2982) protein is Increased glyphosate resistance protein.